The primary structure comprises 1009 residues: Glutamate receptor ionotropic, delta-1 (1009 aa).

The N-terminal stretch at 1-20 (MEALTLWLLPWICQCVSVRA) is a signal peptide. The interaction with CBLN1 stretch occupies residues 21–436 (DSIIHIGAIF…ERPMGSRLQG (416 aa)). Residues 21–562 (DSIIHIGAIF…SIFSLFAPFD (542 aa)) lie on the Extracellular side of the membrane. 3 cysteine pairs are disulfide-bonded: cysteine 80–cysteine 351, cysteine 96–cysteine 128, and cysteine 294–cysteine 306. N-linked (GlcNAc...) asparagine glycans are attached at residues asparagine 131 and asparagine 200. N-linked (GlcNAc...) asparagine glycosylation is found at asparagine 422 and asparagine 498. Residues glutamate 527, valine 530, and aspartate 531 each contribute to the Ca(2+) site. Residues 563 to 583 (FAVWACIAAAIPVVGVLIFVL) traverse the membrane as a helical segment. At 584–637 (NRIQAVRAQSAAQPRPSASATLHSAIWIVYGAFVQQGGESSVNSMAMRIVMGSW) the chain is on the cytoplasmic side. A helical membrane pass occupies residues 638–658 (WLFTLIVCSSYTANLAAFLTV). Topologically, residues 659 to 830 (SRMDNPIRTF…ADGKSLKLHS (172 aa)) are extracellular. Ca(2+) is bound by residues aspartate 753, aspartate 755, and serine 757. The chain crosses the membrane as a helical span at residues 831 to 851 (FAGVFCILAIGLLLACLVAAL). Topologically, residues 852 to 1009 (ELWWNSNRCH…ALDTSHGTSI (158 aa)) are cytoplasmic. Residues 930–942 (FLPEQSSHGTSRT) are compositionally biased toward polar residues. The segment at 930–954 (FLPEQSSHGTSRTLSSGPSSNLPLP) is disordered. Low complexity predominate over residues 943–954 (LSSGPSSNLPLP).

Belongs to the glutamate-gated ion channel (TC 1.A.10.1) family. GRID1 subfamily. In terms of assembly, homodimer. Interacts (via extracellular N-terminal domain) with CBLN1 (via C1q domain), and more weakly with CBLN2; the interactions mediate the trans-synaptic adhesion complexes also with neurexins and are required for ligand-gated cation channel activity.

Its subcellular location is the postsynaptic cell membrane. The catalysed reaction is Ca(2+)(in) = Ca(2+)(out). The enzyme catalyses Na(+)(in) = Na(+)(out). Its function is as follows. Member of the ionotropic glutamate receptor family, which plays a crucial role in synaptic organization and signal transduction in the central nervous system. Although it shares structural features with ionotropic glutamate receptors, does not bind glutamate as a primary ligand. Instead, forms trans-synaptic adhesion complexes with presynaptic neurexins and cerebellins, regulating NMDA and AMPA receptor activity and influencing synaptic plasticity through signal transduction. In the presence of neurexins and cerebellins, forms cation-selective channels that are proposed to be gated by glycine and D-serine. However, recent research disputes this ligand-gated cation channel activity. Cation-selective ion channel can be triggered by GRM1 in dopaminergic neurons. Also acts as a receptor for GABA, modulating inhibitory synaptic plasticity through non-ionotropic mechanisms. This Homo sapiens (Human) protein is Glutamate receptor ionotropic, delta-1.